The sequence spans 61 residues: Small ribosomal subunit protein uS14 (61 aa).

Residues Cys-24, Cys-27, Cys-40, and Cys-43 each contribute to the Zn(2+) site.

The protein belongs to the universal ribosomal protein uS14 family. Zinc-binding uS14 subfamily. In terms of assembly, part of the 30S ribosomal subunit. Contacts proteins S3 and S10. The cofactor is Zn(2+).

Its function is as follows. Binds 16S rRNA, required for the assembly of 30S particles and may also be responsible for determining the conformation of the 16S rRNA at the A site. The sequence is that of Small ribosomal subunit protein uS14 from Streptococcus thermophilus (strain CNRZ 1066).